Consider the following 602-residue polypeptide: Rho family-interacting cell polarization regulator 2 (602 aa).

The disordered stretch occupies residues 46-73; that stretch reads KKPQAKVKKMHNLGHKNSTTPKEPQPKR. Over residues 48–59 the composition is skewed to basic residues; it reads PQAKVKKMHNLG. Residues 83 to 112 adopt a coiled-coil conformation; sequence NGLDEYLEVHQTELDKLTAQLKDMRRNSRL. A necessary for interaction with NCAM and myoblast protrusion formation region spans residues 173–421; it reads RESLTEINRS…TTAATQHRAL (249 aa). The segment at 384–474 is disordered; it reads GDLPYEDRVP…RSEVCQKPSN (91 aa). Residues 403–416 are compositionally biased toward polar residues; the sequence is AHVSSSPDITTAAT. Residues 423–437 are compositionally biased toward low complexity; it reads SSESSSPDCSSSDSC.

It belongs to the RIPOR family. As to quaternary structure, homooligomer; homooligomerization is regulated by RHOC and leads to the formation of concatemers through the association of N- and C-termini. Interacts with NCAM.

The protein resides in the cytoplasm. It localises to the cytoskeleton. It is found in the cell projection. The protein localises to the filopodium. Its subcellular location is the apical cell membrane. The protein resides in the stereocilium. It localises to the stereocilium membrane. In terms of biological role, acts as an inhibitor of the small GTPase RHOA and plays several roles in the regulation of myoblast and hair cell differentiation, lymphocyte T proliferation and neutrophil polarization. Plays a role in fetal mononuclear myoblast differentiation by promoting filopodia and myotube formation. Maintains naive T lymphocytes in a quiescent state and prevents chemokine-induced T lymphocyte responses, such as cell adhesion, polarization and migration. Involved also in the regulation of neutrophil polarization, chemotaxis and adhesion. Required for normal development of inner and outer hair cell stereocilia within the cochlea of the inner ear. Plays a role for maintaining the structural organization of the basal domain of stereocilia. Involved in mechanosensory hair cell function. Required for normal hearing. In Gallus gallus (Chicken), this protein is Rho family-interacting cell polarization regulator 2.